Consider the following 224-residue polypeptide: Enolase-phosphatase E1 (224 aa).

Belongs to the HAD-like hydrolase superfamily. MasA/MtnC family. As to quaternary structure, monomer. It depends on Mg(2+) as a cofactor.

The enzyme catalyses 5-methylsulfanyl-2,3-dioxopentyl phosphate + H2O = 1,2-dihydroxy-5-(methylsulfanyl)pent-1-en-3-one + phosphate. It participates in amino-acid biosynthesis; L-methionine biosynthesis via salvage pathway; L-methionine from S-methyl-5-thio-alpha-D-ribose 1-phosphate: step 3/6. The protein operates within amino-acid biosynthesis; L-methionine biosynthesis via salvage pathway; L-methionine from S-methyl-5-thio-alpha-D-ribose 1-phosphate: step 4/6. Its function is as follows. Bifunctional enzyme that catalyzes the enolization of 2,3-diketo-5-methylthiopentyl-1-phosphate (DK-MTP-1-P) into the intermediate 2-hydroxy-3-keto-5-methylthiopentenyl-1-phosphate (HK-MTPenyl-1-P), which is then dephosphorylated to form the acireductone 1,2-dihydroxy-3-keto-5-methylthiopentene (DHK-MTPene). In Thioalkalivibrio sulfidiphilus (strain HL-EbGR7), this protein is Enolase-phosphatase E1.